The following is a 413-amino-acid chain: uncharacterized protein (413 aa).

One can recognise an N-acetyltransferase domain in the interval 3 to 155 (MEPRVLRREE…SRVRLSVPAG (153 aa)). Residues 86-88 (VSV), 94-99 (RRGVLT), and 122-123 (SE) contribute to the acetyl-CoA site. The Proton donor role is filled by Tyr-127. The active-site Proton acceptor; via carboxylate is the Phe-413.

The protein belongs to the acetyltransferase Eis family. As to quaternary structure, homohexamer; trimer of dimers.

This is an uncharacterized protein from Streptomyces coelicolor (strain ATCC BAA-471 / A3(2) / M145).